The following is a 243-amino-acid chain: UDP-2,3-diacylglucosamine hydrolase (243 aa).

Mn(2+) contacts are provided by Asp-9, His-11, Asp-42, Asn-79, and His-114. Position 79–80 (79–80) interacts with substrate; it reads NR. Asp-122, Ser-160, Asn-164, and His-195 together coordinate substrate. His-195 and His-197 together coordinate Mn(2+).

It belongs to the LpxH family. Requires Mn(2+) as cofactor.

It is found in the cell inner membrane. The enzyme catalyses UDP-2-N,3-O-bis[(3R)-3-hydroxytetradecanoyl]-alpha-D-glucosamine + H2O = 2-N,3-O-bis[(3R)-3-hydroxytetradecanoyl]-alpha-D-glucosaminyl 1-phosphate + UMP + 2 H(+). Its pathway is glycolipid biosynthesis; lipid IV(A) biosynthesis; lipid IV(A) from (3R)-3-hydroxytetradecanoyl-[acyl-carrier-protein] and UDP-N-acetyl-alpha-D-glucosamine: step 4/6. Its function is as follows. Hydrolyzes the pyrophosphate bond of UDP-2,3-diacylglucosamine to yield 2,3-diacylglucosamine 1-phosphate (lipid X) and UMP by catalyzing the attack of water at the alpha-P atom. Involved in the biosynthesis of lipid A, a phosphorylated glycolipid that anchors the lipopolysaccharide to the outer membrane of the cell. This chain is UDP-2,3-diacylglucosamine hydrolase, found in Coxiella burnetii (strain Dugway 5J108-111).